The chain runs to 1429 residues: Autophagy-related protein 11 (1429 aa).

Positions 71–99 (TQRSQPGASSPPLSELPLPRYNAHTPPNS) are disordered. The span at 80-89 (SPPLSELPLP) shows a compositional bias: low complexity. Coiled-coil stretches lie at residues 143-173 (VMLRCLDAAVANLENAVKGLENKYVELKEWS), 553-590 (DDLLRSLQADKTRLESKLKTAESRVRRLEDLLHRQTQA), 632-815 (LETL…LEDI), and 851-989 (EGDM…RLES). The disordered stretch occupies residues 1024 to 1061 (DGTMHIQRTPRSERSLATTANPNDSDPSSSLRRSSTLN). Over residues 1042 to 1061 (TANPNDSDPSSSLRRSSTLN) the composition is skewed to low complexity. The stretch at 1105–1143 (ADAVYRRVKDVEHMARKLQREARAYREKAHSFQKEAHDK) forms a coiled coil. Residues 1209 to 1229 (SKSLQHDQAGETRKDGARGET) are compositionally biased toward basic and acidic residues. Disordered regions lie at residues 1209–1241 (SKSLQHDQAGETRKDGARGETESLDDDENDNPF) and 1336–1429 (SSRG…LIGP). Over residues 1230–1239 (ESLDDDENDN) the composition is skewed to acidic residues. Composition is skewed to polar residues over residues 1345–1372 (ASETNSLRAVPADNNSSAPTNAAQQHMS) and 1383–1393 (QETPQQTNSIS).

It belongs to the ATG11 family. As to quaternary structure, homodimer.

It localises to the preautophagosomal structure membrane. The protein localises to the vacuole membrane. In terms of biological role, involved in cytoplasm to vacuole transport (Cvt), pexophagy, mitophagy and nucleophagy. Recruits mitochondria for their selective degradation via autophagy (mitophagy) during starvation. Works as scaffold proteins that recruit ATG proteins to the pre-autophagosome (PAS), the site of vesicle/autophagosome formation. Required for the Cvt vesicles completion. The sequence is that of Autophagy-related protein 11 (apg-8) from Neurospora crassa (strain ATCC 24698 / 74-OR23-1A / CBS 708.71 / DSM 1257 / FGSC 987).